The following is a 636-amino-acid chain: Molybdenum cofactor biosynthesis protein 1 (636 aa).

Residues 1 to 383 (MAARPLSRML…QMKNRPMILI (383 aa)) are molybdenum cofactor biosynthesis protein A. Ser64 bears the Phosphoserine mark. Positions 64–277 (SFGRQHSYLR…LDTVRQQWPE (214 aa)) constitute a Radical SAM core domain. Arg73 lines the GTP pocket. Cys80 and Cys84 together coordinate [4Fe-4S] cluster. Tyr86 contacts S-adenosyl-L-methionine. Cys87 serves as a coordination point for [4Fe-4S] cluster. Arg123 provides a ligand contact to GTP. Gly127 lines the S-adenosyl-L-methionine pocket. Thr154 provides a ligand contact to GTP. Ser178 contacts S-adenosyl-L-methionine. Lys198 carries the N6-acetyllysine modification. Residue Lys215 participates in GTP binding. Met249 contributes to the S-adenosyl-L-methionine binding site. Cys312 and Cys315 together coordinate [4Fe-4S] cluster. Residue 317 to 319 (RLR) coordinates GTP. Cys329 is a binding site for [4Fe-4S] cluster. The segment at 414-636 (MSFSSQVATL…GGQRGDFHRA (223 aa)) is molybdenum cofactor biosynthesis protein C. The disordered stretch occupies residues 456 to 480 (DANSKCLSPGSWASAAPSGPQLTSE). Residues 463–475 (SPGSWASAAPSGP) show a composition bias toward low complexity. At Lys528 the chain carries N6-acetyllysine. Asp606 serves as the catalytic For molybdenum cofactor biosynthesis protein C activity.

This sequence in the C-terminal section; belongs to the MoaC family. It in the N-terminal section; belongs to the radical SAM superfamily. MoaA family. As to quaternary structure, isoform MOCS1A and isoform MOCS1B probably form a heterooligomer. Requires [4Fe-4S] cluster as cofactor. As to expression, isoform MOCS1A and isoform 2 are widely expressed.

It catalyses the reaction GTP + AH2 + S-adenosyl-L-methionine = (8S)-3',8-cyclo-7,8-dihydroguanosine 5'-triphosphate + 5'-deoxyadenosine + L-methionine + A + H(+). The enzyme catalyses (8S)-3',8-cyclo-7,8-dihydroguanosine 5'-triphosphate = cyclic pyranopterin phosphate + diphosphate. Its pathway is cofactor biosynthesis; molybdopterin biosynthesis. Isoform MOCS1A and isoform MOCS1B probably form a complex that catalyzes the conversion of 5'-GTP to cyclic pyranopterin monophosphate (cPMP). MOCS1A catalyzes the cyclization of GTP to (8S)-3',8-cyclo-7,8-dihydroguanosine 5'-triphosphate and MOCS1B catalyzes the subsequent conversion of (8S)-3',8-cyclo-7,8-dihydroguanosine 5'-triphosphate to cPMP. The sequence is that of Molybdenum cofactor biosynthesis protein 1 (MOCS1) from Homo sapiens (Human).